The following is a 213-amino-acid chain: Chloramphenicol acetyltransferase 3 (213 aa).

H189 (proton acceptor) is an active-site residue.

It belongs to the chloramphenicol acetyltransferase family. As to quaternary structure, homotrimer.

The enzyme catalyses chloramphenicol + acetyl-CoA = chloramphenicol 3-acetate + CoA. Its function is as follows. This enzyme is an effector of chloramphenicol resistance in bacteria. This Escherichia coli protein is Chloramphenicol acetyltransferase 3 (cat3).